A 131-amino-acid polypeptide reads, in one-letter code: Large ribosomal subunit protein bL12 (131 aa).

Belongs to the bacterial ribosomal protein bL12 family. In terms of assembly, homodimer. Part of the ribosomal stalk of the 50S ribosomal subunit. Forms a multimeric L10(L12)X complex, where L10 forms an elongated spine to which 2 to 4 L12 dimers bind in a sequential fashion. Binds GTP-bound translation factors.

In terms of biological role, forms part of the ribosomal stalk which helps the ribosome interact with GTP-bound translation factors. Is thus essential for accurate translation. The sequence is that of Large ribosomal subunit protein bL12 from Prochlorococcus marinus (strain NATL2A).